A 523-amino-acid chain; its full sequence is MRWKYAAWILIAVVDVMCCSSEEKSASVSFVTRPGSQVIAFPFIFVGHSIVVLPTTKYSNLKRNAKSMEDLTFLLSNLSHVVWSLTIDATVYKDGGRLEKLFDKRMRGYLDGVSLDVLRMYVNGSKTFSELLQIVYERTFECDSRRSRQMARYGESLIREIDNMIESMPAEMSEEEKEKMRSDLNNNRKYVESFHDTEKWRQVVEAEKMVCNTCKEICLGLKEEELMGLLAEGSAKKYIKASAGESKVSSTVYPEYIVVDISLLLDAHREHGGDVTKELVKQMLLGKKEEEIDKRYIGKVANAVKERRRRGEKEIEKRVKKLLRDEEKAKSKKRGKRKSVGVSEAKEEEKKESETEEVEAGEEVEMPSEEVGGARRKTGKKSEGGRKRYKIHRRVLRWRKSPEKIKEEWDKGSEERWRGKSLEEIREQKVFHDIMGVLELLRSPDADRFFMDTGDYTKGGSERQRMVAIGVLESGGKRMLGVVEVGTFKDCPSGCPVVYHLMFRVTGIEGMGDVMRRGGGQSW.

The segment at 326-386 (EEKAKSKKRG…KTGKKSEGGR (61 aa)) is disordered. Basic residues predominate over residues 330–339 (KSKKRGKRKS). Over residues 344–353 (EAKEEEKKES) the composition is skewed to basic and acidic residues. The segment covering 354 to 368 (ETEEVEAGEEVEMPS) has biased composition (acidic residues).

Belongs to the UPF0329 family.

This Encephalitozoon cuniculi (strain GB-M1) (Microsporidian parasite) protein is UPF0329 protein ECU02_0050.